Reading from the N-terminus, the 68-residue chain is Copper transport protein ATOX1 (68 aa).

Residues 1-63 form the HMA domain; sequence MPKHEFSVDM…TLEKTGKAVS (63 aa). 2 residues coordinate Cu cation: C12 and C15. Residue S47 is modified to Phosphoserine. At K60 the chain carries N6-acetyllysine.

The protein belongs to the ATX1 family. In terms of assembly, homodimer. Interacts with ATP7B. Interacts with ATP7A. Interacts (via dimer form) with SLC31A1 (via C-terminal domain); this interaction improves ATOX1 stability and controls intracellular Cu(I) levels.

Its function is as follows. Binds and deliver cytosolic copper to the copper ATPase proteins. May be important in cellular antioxidant defense. This chain is Copper transport protein ATOX1, found in Canis lupus familiaris (Dog).